The sequence spans 453 residues: Carbamoyl phosphate synthase arginine-specific small chain (453 aa).

Residues 1–13 constitute a mitochondrion transit peptide; sequence MFSKLAANFAQRA. The region spanning 233–420 is the Glutamine amidotransferase type-1 domain; that stretch reads HVALIDCGVK…LENVRAAKSA (188 aa). Cys309 (nucleophile) is an active-site residue. Active-site residues include His393 and Glu395.

It belongs to the CarA family. Heterodimer composed of 2 chains; the small (or glutamine) chain promotes the hydrolysis of glutamine to ammonia, which is used by the large (or ammonia) chain to synthesize carbamoyl phosphate.

It localises to the mitochondrion matrix. It catalyses the reaction hydrogencarbonate + L-glutamine + 2 ATP + H2O = carbamoyl phosphate + L-glutamate + 2 ADP + phosphate + 2 H(+). It carries out the reaction L-glutamine + H2O = L-glutamate + NH4(+). Its pathway is amino-acid biosynthesis; L-arginine biosynthesis; carbamoyl phosphate from bicarbonate: step 1/1. Its function is as follows. Small subunit of the arginine-specific carbamoyl phosphate synthase (CPSase). CPSase catalyzes the formation of carbamoyl phosphate from the ammonia moiety of glutamine, carbonate, and phosphate donated by ATP, the first step of the arginine biosynthetic pathway. The small subunit (glutamine amidotransferase) binds and cleaves glutamine to supply the large subunit with the substrate ammonia. In Hypocrea virens (Gliocladium virens), this protein is Carbamoyl phosphate synthase arginine-specific small chain (cpa1).